The primary structure comprises 138 residues: Acidic phospholipase A2 Drk-a1 (138 aa).

The first 16 residues, 1–16 (MRTLWIVAVCLIGVEG), serve as a signal peptide directing secretion. Cystine bridges form between Cys-42-Cys-131, Cys-44-Cys-60, Cys-59-Cys-111, Cys-65-Cys-138, Cys-66-Cys-104, Cys-73-Cys-97, and Cys-91-Cys-102. Ca(2+) is bound by residues Tyr-43, Gly-45, and Gly-47. His-63 is a catalytic residue. A Ca(2+)-binding site is contributed by Asp-64. Asp-105 is a catalytic residue.

Belongs to the phospholipase A2 family. Group II subfamily. D49 sub-subfamily. It depends on Ca(2+) as a cofactor. Expressed by the venom gland.

It is found in the secreted. It carries out the reaction a 1,2-diacyl-sn-glycero-3-phosphocholine + H2O = a 1-acyl-sn-glycero-3-phosphocholine + a fatty acid + H(+). Its function is as follows. Snake venom phospholipase A2 (PLA2) that exhibits high hydrolytic activities and shows strong preference for the anionic micelles (dPPC with deoxycholate) to the zwitterionic micelles (dPPC with Triton X-100). PLA2 catalyzes the calcium-dependent hydrolysis of the 2-acyl groups in 3-sn-phosphoglycerides. The sequence is that of Acidic phospholipase A2 Drk-a1 from Daboia russelii (Russel's viper).